The sequence spans 182 residues: ATP synthase subunit delta (182 aa).

The protein belongs to the ATPase delta chain family. F-type ATPases have 2 components, F(1) - the catalytic core - and F(0) - the membrane proton channel. F(1) has five subunits: alpha(3), beta(3), gamma(1), delta(1), epsilon(1). F(0) has three main subunits: a(1), b(2) and c(10-14). The alpha and beta chains form an alternating ring which encloses part of the gamma chain. F(1) is attached to F(0) by a central stalk formed by the gamma and epsilon chains, while a peripheral stalk is formed by the delta and b chains.

Its subcellular location is the cell inner membrane. Its function is as follows. F(1)F(0) ATP synthase produces ATP from ADP in the presence of a proton or sodium gradient. F-type ATPases consist of two structural domains, F(1) containing the extramembraneous catalytic core and F(0) containing the membrane proton channel, linked together by a central stalk and a peripheral stalk. During catalysis, ATP synthesis in the catalytic domain of F(1) is coupled via a rotary mechanism of the central stalk subunits to proton translocation. This protein is part of the stalk that links CF(0) to CF(1). It either transmits conformational changes from CF(0) to CF(1) or is implicated in proton conduction. The chain is ATP synthase subunit delta from Cytophaga hutchinsonii (strain ATCC 33406 / DSM 1761 / CIP 103989 / NBRC 15051 / NCIMB 9469 / D465).